A 485-amino-acid chain; its full sequence is Threonine synthase-like 2 (485 aa).

K113 is subject to N6-(pyridoxal phosphate)lysine.

Belongs to the threonine synthase family. Pyridoxal 5'-phosphate is required as a cofactor.

Its function is as follows. Acts as a catabolic phospho-lyase on both gamma- and beta-phosphorylated substrates. Degrades O-phospho-threonine (PThr) to alpha-ketobutyrate, ammonia and phosphate. The polypeptide is Threonine synthase-like 2 (Thnsl2) (Rattus norvegicus (Rat)).